A 186-amino-acid polypeptide reads, in one-letter code: MAQRERNREERGREERDSEFVDKLVHINRVAKVVKGGRRFGFAALIVVGDQKGRVGFGHGKAREVPEAIRKATEAAKRDMIFVPLRSGRTLHHDVEGRHGAGKVLLRAAPAGKGIIAGGPMRAVFETLGVQDVVAKSLGSSNPYNMVRATFDALKHQMHPKDIAAQRGIKYSTLQARRHDVVGSEE.

The S5 DRBM domain occupies 20 to 83 (FVDKLVHINR…EAAKRDMIFV (64 aa)).

Belongs to the universal ribosomal protein uS5 family. Part of the 30S ribosomal subunit. Contacts proteins S4 and S8.

Functionally, with S4 and S12 plays an important role in translational accuracy. In terms of biological role, located at the back of the 30S subunit body where it stabilizes the conformation of the head with respect to the body. This Brucella ovis (strain ATCC 25840 / 63/290 / NCTC 10512) protein is Small ribosomal subunit protein uS5.